The sequence spans 530 residues: Tegument protein UL21 homolog (530 aa).

This sequence belongs to the alphaherpesvirinae UL21 protein family. As to quaternary structure, interacts (via C-terminus) with UL16.

The protein localises to the virion tegument. Its subcellular location is the host cytoplasm. The protein resides in the host nucleus. May participate in DNA packaging/capsid maturation events. Promotes efficient incorporation of tegument proteins UL46, UL49, and US3 homologs into virions. May also play a role in capsid transport to the trans-Golgi network (TGN). This is Tegument protein UL21 homolog from Equus caballus (Horse).